The sequence spans 142 residues: MVLSANDKSNVKSIFSKISSHAEEYGAETLERMFTTYPQTKTYFPHFDLHHGSAQVKAHGKKVAAALIEAANHIDDIAGALSKLSDLHAEKLRVDPVNFKLLGQCFMVVVAIHHPSALTPEIHASLDKFLCAVGNVLTSKYR.

A Globin domain is found at Val2–Arg142. His59 is an O2 binding site. Residue His88 participates in heme b binding.

It belongs to the globin family. In terms of assembly, heterotetramer of two alpha chains and two beta chains. As to expression, red blood cells.

In terms of biological role, involved in oxygen transport from the lung to the various peripheral tissues. This is Hemoglobin subunit alpha (HBA) from Aptenodytes forsteri (Emperor penguin).